The following is a 160-amino-acid chain: 6,7-dimethyl-8-ribityllumazine synthase (160 aa).

5-amino-6-(D-ribitylamino)uracil contacts are provided by residues Phe-28, 62–64 (ALE), and 86–88 (AVI). Position 91–92 (91–92 (ET)) interacts with (2S)-2-hydroxy-3-oxobutyl phosphate. His-94 serves as the catalytic Proton donor. Asn-119 contributes to the 5-amino-6-(D-ribitylamino)uracil binding site. Arg-133 lines the (2S)-2-hydroxy-3-oxobutyl phosphate pocket.

Belongs to the DMRL synthase family.

The enzyme catalyses (2S)-2-hydroxy-3-oxobutyl phosphate + 5-amino-6-(D-ribitylamino)uracil = 6,7-dimethyl-8-(1-D-ribityl)lumazine + phosphate + 2 H2O + H(+). Its pathway is cofactor biosynthesis; riboflavin biosynthesis; riboflavin from 2-hydroxy-3-oxobutyl phosphate and 5-amino-6-(D-ribitylamino)uracil: step 1/2. Its function is as follows. Catalyzes the formation of 6,7-dimethyl-8-ribityllumazine by condensation of 5-amino-6-(D-ribitylamino)uracil with 3,4-dihydroxy-2-butanone 4-phosphate. This is the penultimate step in the biosynthesis of riboflavin. The protein is 6,7-dimethyl-8-ribityllumazine synthase of Nitrosospira multiformis (strain ATCC 25196 / NCIMB 11849 / C 71).